Reading from the N-terminus, the 68-residue chain is Conotoxin Eb11.7 (68 aa).

The N-terminal stretch at 1–26 (MMFRLTSVSCFLLVIVCLNLFQVVLT) is a signal peptide. 4 cysteine pairs are disulfide-bonded: Cys29/Cys43, Cys36/Cys48, Cys42/Cys52, and Cys47/Cys56. At Phe60 the chain carries Phenylalanine amide. Positions 64-68 (ATFQE) are excised as a propeptide.

The protein belongs to the conotoxin I2 superfamily. Expressed by the venom duct.

The protein resides in the secreted. The sequence is that of Conotoxin Eb11.7 from Conus eburneus (Ivory cone).